The primary structure comprises 347 residues: Probable dual-specificity RNA methyltransferase RlmN (347 aa).

E91 (proton acceptor) is an active-site residue. One can recognise a Radical SAM core domain in the interval Y97–D327. The cysteines at positions 104 and 332 are disulfide-linked. Residues C111, C115, and C118 each contribute to the [4Fe-4S] cluster site. Residues G158–E159, S190, S213–H215, and N289 contribute to the S-adenosyl-L-methionine site. C332 (S-methylcysteine intermediate) is an active-site residue.

It belongs to the radical SAM superfamily. RlmN family. [4Fe-4S] cluster serves as cofactor.

The protein localises to the cytoplasm. The catalysed reaction is adenosine(2503) in 23S rRNA + 2 reduced [2Fe-2S]-[ferredoxin] + 2 S-adenosyl-L-methionine = 2-methyladenosine(2503) in 23S rRNA + 5'-deoxyadenosine + L-methionine + 2 oxidized [2Fe-2S]-[ferredoxin] + S-adenosyl-L-homocysteine. It carries out the reaction adenosine(37) in tRNA + 2 reduced [2Fe-2S]-[ferredoxin] + 2 S-adenosyl-L-methionine = 2-methyladenosine(37) in tRNA + 5'-deoxyadenosine + L-methionine + 2 oxidized [2Fe-2S]-[ferredoxin] + S-adenosyl-L-homocysteine. Specifically methylates position 2 of adenine 2503 in 23S rRNA and position 2 of adenine 37 in tRNAs. The protein is Probable dual-specificity RNA methyltransferase RlmN of Clostridium perfringens (strain SM101 / Type A).